The chain runs to 190 residues: Putative manganese efflux pump MntP (190 aa).

6 consecutive transmembrane segments (helical) span residues 3-23 (MSAT…ASIG), 41-61 (LIFG…GFFA), 62-82 (SQYI…ILGG), 105-127 (LALL…VGLA), 143-163 (ATMI…PILG), and 168-188 (VMGG…HLGY).

The protein belongs to the MntP (TC 9.B.29) family.

It localises to the cell inner membrane. Functionally, probably functions as a manganese efflux pump. This Pectobacterium carotovorum subsp. carotovorum (strain PC1) protein is Putative manganese efflux pump MntP.